The following is a 398-amino-acid chain: Serpin-Z2A (398 aa).

An RCL region spans residues 343-367 (GTEAAAATIAKAVLLSASPPSDMDF).

Belongs to the serpin family.

Functionally, inhibits chymotrypsin and cathepsin G in vitro. The sequence is that of Serpin-Z2A from Triticum aestivum (Wheat).